Consider the following 414-residue polypeptide: Serine hydroxymethyltransferase (414 aa).

(6S)-5,6,7,8-tetrahydrofolate contacts are provided by residues Leu-116 and 120 to 122 (GHL). An N6-(pyridoxal phosphate)lysine modification is found at Lys-224. (6S)-5,6,7,8-tetrahydrofolate is bound by residues Glu-240 and 348-350 (SPF).

This sequence belongs to the SHMT family. In terms of assembly, homodimer. Pyridoxal 5'-phosphate serves as cofactor.

It is found in the cytoplasm. The catalysed reaction is (6R)-5,10-methylene-5,6,7,8-tetrahydrofolate + glycine + H2O = (6S)-5,6,7,8-tetrahydrofolate + L-serine. It participates in one-carbon metabolism; tetrahydrofolate interconversion. Its pathway is amino-acid biosynthesis; glycine biosynthesis; glycine from L-serine: step 1/1. Its function is as follows. Catalyzes the reversible interconversion of serine and glycine with tetrahydrofolate (THF) serving as the one-carbon carrier. This reaction serves as the major source of one-carbon groups required for the biosynthesis of purines, thymidylate, methionine, and other important biomolecules. Also exhibits THF-independent aldolase activity toward beta-hydroxyamino acids, producing glycine and aldehydes, via a retro-aldol mechanism. The sequence is that of Serine hydroxymethyltransferase from Campylobacter fetus subsp. fetus (strain 82-40).